The following is a 215-amino-acid chain: Pyrophosphatase PpaX (215 aa).

The Nucleophile role is filled by aspartate 9.

This sequence belongs to the HAD-like hydrolase superfamily. PpaX family. Mg(2+) is required as a cofactor.

It catalyses the reaction diphosphate + H2O = 2 phosphate + H(+). In terms of biological role, hydrolyzes pyrophosphate formed during P-Ser-HPr dephosphorylation by HPrK/P. Might play a role in controlling the intracellular pyrophosphate pool. The polypeptide is Pyrophosphatase PpaX (Halalkalibacterium halodurans (strain ATCC BAA-125 / DSM 18197 / FERM 7344 / JCM 9153 / C-125) (Bacillus halodurans)).